Consider the following 300-residue polypeptide: Fe(3+) dicitrate-binding periplasmic protein FecB (300 aa).

An N-terminal signal peptide occupies residues 1 to 21 (MLAFIRFLFAGLLLVISHAFA). The Fe/B12 periplasmic-binding domain maps to 39 to 295 (RIVVLELSFA…DTVKIFHHQP (257 aa)).

The protein belongs to the bacterial solute-binding protein 8 family. The complex is composed of two ATP-binding proteins (FecE), two transmembrane proteins (FecC and FecD) and a solute-binding protein (FecB). Interacts with FecC and FecD.

Its subcellular location is the periplasm. In terms of biological role, part of the ABC transporter complex FecBCDE involved in citrate-dependent Fe(3+) uptake. Binds both iron-free and iron-loaded citrate although it binds iron-loaded citrate with a higher affinity. Binds different forms of Fe(3+)-citrate as well as citrate complexed with various representative Fe(3+)-mimics (Ga(3+), Al(3+), Sc(3+) and In(3+)) and a representative divalent metal ion (Mg(2+)). Can also bind various tricarboxylates in iron-free and iron-loaded form. This Escherichia coli (strain K12) protein is Fe(3+) dicitrate-binding periplasmic protein FecB.